Consider the following 546-residue polypeptide: CTP synthase (546 aa).

Residues 1–269 form an amidoligase domain region; it reads MNSNTKIIFV…DAKLVELLNL (269 aa). Residue serine 16 coordinates CTP. Serine 16 is a UTP binding site. ATP-binding positions include 17–22 and aspartate 74; that span reads SLGKGV. Residues aspartate 74 and glutamate 143 each contribute to the Mg(2+) site. Residues 150-152, 190-195, and lysine 226 contribute to the CTP site; these read DIE and KTKPTQ. Residues 190–195 and lysine 226 each bind UTP; that span reads KTKPTQ. The Glutamine amidotransferase type-1 domain occupies 294–546; sequence TIAMVGKYVS…IQAAIENSNN (253 aa). Glycine 356 lines the L-glutamine pocket. Cysteine 383 acts as the Nucleophile; for glutamine hydrolysis in catalysis. Residues 384 to 387, glutamate 407, and arginine 474 contribute to the L-glutamine site; that span reads LGMQ. Active-site residues include histidine 519 and glutamate 521.

The protein belongs to the CTP synthase family. In terms of assembly, homotetramer.

The catalysed reaction is UTP + L-glutamine + ATP + H2O = CTP + L-glutamate + ADP + phosphate + 2 H(+). It carries out the reaction L-glutamine + H2O = L-glutamate + NH4(+). It catalyses the reaction UTP + NH4(+) + ATP = CTP + ADP + phosphate + 2 H(+). It participates in pyrimidine metabolism; CTP biosynthesis via de novo pathway; CTP from UDP: step 2/2. Its activity is regulated as follows. Allosterically activated by GTP, when glutamine is the substrate; GTP has no effect on the reaction when ammonia is the substrate. The allosteric effector GTP functions by stabilizing the protein conformation that binds the tetrahedral intermediate(s) formed during glutamine hydrolysis. Inhibited by the product CTP, via allosteric rather than competitive inhibition. Its function is as follows. Catalyzes the ATP-dependent amination of UTP to CTP with either L-glutamine or ammonia as the source of nitrogen. Regulates intracellular CTP levels through interactions with the four ribonucleotide triphosphates. The chain is CTP synthase from Francisella tularensis subsp. tularensis (strain FSC 198).